Consider the following 554-residue polypeptide: Folate synthesis bifunctional protein, mitochondrial (554 aa).

Residues 1-42 (MAPLLSQTLIHTGRFLLRRFLEPPPAVISAVAASRVCFHRYY) constitute a mitochondrion transit peptide. The HPPK stretch occupies residues 90–215 (VIALGSNIGN…SFVLAPLVDL (126 aa)). In terms of domain architecture, Pterin-binding spans 273 to 541 (THVMGILNLT…NVRHNADAAK (269 aa)). The DHPS stretch occupies residues 275–554 (VMGILNLTPD…AMLRRRRSKG (280 aa)). Asparagine 280 provides a ligand contact to Mg(2+). (7,8-dihydropterin-6-yl)methyl diphosphate is bound by residues threonine 320, aspartate 357, asparagine 376, aspartate 449, lysine 494, and 529–531 (RVH).

The protein in the N-terminal section; belongs to the HPPK family. This sequence in the C-terminal section; belongs to the DHPS family. Mg(2+) serves as cofactor. As to expression, ubiquitous.

Its subcellular location is the mitochondrion. It carries out the reaction 6-hydroxymethyl-7,8-dihydropterin + ATP = (7,8-dihydropterin-6-yl)methyl diphosphate + AMP + H(+). The enzyme catalyses (7,8-dihydropterin-6-yl)methyl diphosphate + 4-aminobenzoate = 7,8-dihydropteroate + diphosphate. Its pathway is cofactor biosynthesis; tetrahydrofolate biosynthesis; 2-amino-4-hydroxy-6-hydroxymethyl-7,8-dihydropteridine diphosphate from 7,8-dihydroneopterin triphosphate: step 4/4. The protein operates within cofactor biosynthesis; tetrahydrofolate biosynthesis; 7,8-dihydrofolate from 2-amino-4-hydroxy-6-hydroxymethyl-7,8-dihydropteridine diphosphate and 4-aminobenzoate: step 1/2. In terms of biological role, catalyzes the first two consecutive steps of tetrahydrofolate biosynthesis. This is Folate synthesis bifunctional protein, mitochondrial from Arabidopsis thaliana (Mouse-ear cress).